We begin with the raw amino-acid sequence, 291 residues long: Light-independent protochlorophyllide reductase iron-sulfur ATP-binding protein (291 aa).

ATP contacts are provided by residues 10–15 and K39; that span reads GIGKST. S14 contacts Mg(2+). C95 and C129 together coordinate [4Fe-4S] cluster. Residue 180–181 participates in ATP binding; the sequence is NR.

This sequence belongs to the NifH/BchL/ChlL family. As to quaternary structure, homodimer. Protochlorophyllide reductase is composed of three subunits; ChlL, ChlN and ChlB. It depends on [4Fe-4S] cluster as a cofactor.

Its subcellular location is the plastid. It localises to the chloroplast. The enzyme catalyses chlorophyllide a + oxidized 2[4Fe-4S]-[ferredoxin] + 2 ADP + 2 phosphate = protochlorophyllide a + reduced 2[4Fe-4S]-[ferredoxin] + 2 ATP + 2 H2O. It functions in the pathway porphyrin-containing compound metabolism; chlorophyll biosynthesis (light-independent). In terms of biological role, component of the dark-operative protochlorophyllide reductase (DPOR) that uses Mg-ATP and reduced ferredoxin to reduce ring D of protochlorophyllide (Pchlide) to form chlorophyllide a (Chlide). This reaction is light-independent. The L component serves as a unique electron donor to the NB-component of the complex, and binds Mg-ATP. The polypeptide is Light-independent protochlorophyllide reductase iron-sulfur ATP-binding protein (Pinus koraiensis (Korean pine)).